The sequence spans 351 residues: N-acetyl-gamma-glutamyl-phosphate reductase (351 aa).

Cys150 is a catalytic residue.

Belongs to the NAGSA dehydrogenase family. Type 1 subfamily.

It localises to the cytoplasm. It carries out the reaction N-acetyl-L-glutamate 5-semialdehyde + phosphate + NADP(+) = N-acetyl-L-glutamyl 5-phosphate + NADPH + H(+). It functions in the pathway amino-acid biosynthesis; L-arginine biosynthesis; N(2)-acetyl-L-ornithine from L-glutamate: step 3/4. Functionally, catalyzes the NADPH-dependent reduction of N-acetyl-5-glutamyl phosphate to yield N-acetyl-L-glutamate 5-semialdehyde. This is N-acetyl-gamma-glutamyl-phosphate reductase from Heliobacterium modesticaldum (strain ATCC 51547 / Ice1).